Consider the following 610-residue polypeptide: UvrABC system protein C (610 aa).

The region spanning 16 to 94 (SQPGVYRMYD…IKLYQPRYNV (79 aa)) is the GIY-YIG domain. In terms of domain architecture, UVR spans 204–239 (DQVINQLVSRMEQASQNLAFEEAARLRDQIQAVRRV).

The protein belongs to the UvrC family. In terms of assembly, interacts with UvrB in an incision complex.

It is found in the cytoplasm. Its function is as follows. The UvrABC repair system catalyzes the recognition and processing of DNA lesions. UvrC both incises the 5' and 3' sides of the lesion. The N-terminal half is responsible for the 3' incision and the C-terminal half is responsible for the 5' incision. This is UvrABC system protein C from Cronobacter sakazakii (strain ATCC BAA-894) (Enterobacter sakazakii).